Reading from the N-terminus, the 263-residue chain is Receptor-transporting protein 1 (263 aa).

Over 1-238 (MRIFRPWRLR…ETGSGCNFCS (238 aa)) the chain is Cytoplasmic. The 3CxxC-type zinc-finger motif lies at 88 to 197 (ASGRFHCSWC…GEFCEACQEG (110 aa)). A helical transmembrane segment spans residues 239–259 (IPWCLFWATVLMLIIYLQFSF). Over 260–263 (RTSV) the chain is Extracellular.

It belongs to the TMEM7 family. As to quaternary structure, interacts with olfactory receptors. Predominantly expressed in olfactory and vomeronasal organs, in mature olfactory sensory neurons.

It localises to the cell membrane. Functionally, specifically promotes functional cell surface expression of olfactory receptors, but not of other GPCRs. This Mus musculus (Mouse) protein is Receptor-transporting protein 1 (Rtp1).